The primary structure comprises 506 residues: AMP phosphorylase (506 aa).

Residues Gly167, 193 to 198, and Thr202 each bind AMP; that span reads SRAITG. The active-site Proton donor is the Asp255. AMP is bound by residues Ser263 and Lys287.

Belongs to the thymidine/pyrimidine-nucleoside phosphorylase family. Type 2 subfamily.

The enzyme catalyses AMP + phosphate = alpha-D-ribose 1,5-bisphosphate + adenine. The catalysed reaction is CMP + phosphate = cytosine + alpha-D-ribose 1,5-bisphosphate. It catalyses the reaction UMP + phosphate = alpha-D-ribose 1,5-bisphosphate + uracil. In terms of biological role, catalyzes the conversion of AMP and phosphate to adenine and ribose 1,5-bisphosphate (R15P). Exhibits phosphorylase activity toward CMP and UMP in addition to AMP. Functions in an archaeal AMP degradation pathway, together with R15P isomerase and RubisCO. The sequence is that of AMP phosphorylase from Methanosarcina barkeri (strain Fusaro / DSM 804).